The primary structure comprises 352 residues: (2E,6E)-farnesyl diphosphate synthase (352 aa).

Lys43, Arg46, and His77 together coordinate isopentenyl diphosphate. Residues Asp84 and Asp88 each coordinate Mg(2+). The DDXXD motif motif lies at 84 to 88 (DDLID). Arg94 contributes to the isopentenyl diphosphate binding site. Residues 236-240 (DDVLG) carry the DDXXD motif motif.

It belongs to the FPP/GGPP synthase family. Requires Mg(2+) as cofactor.

It carries out the reaction isopentenyl diphosphate + dimethylallyl diphosphate = (2E)-geranyl diphosphate + diphosphate. The catalysed reaction is isopentenyl diphosphate + (2E)-geranyl diphosphate = (2E,6E)-farnesyl diphosphate + diphosphate. Its pathway is isoprenoid biosynthesis; geranyl diphosphate biosynthesis; geranyl diphosphate from dimethylallyl diphosphate and isopentenyl diphosphate: step 1/1. It functions in the pathway isoprenoid biosynthesis; farnesyl diphosphate biosynthesis; farnesyl diphosphate from geranyl diphosphate and isopentenyl diphosphate. In terms of biological role, catalyzes the sequential condensations of isopentenyl pyrophosphate (IPP) with dimethylallyl diphosphate (DMAPP) to yield geranyl diphosphate (GPP) and with GPP to yield (2E,6E)-farnesyl diphosphate (E,E-FPP). In Mycobacterium tuberculosis (strain ATCC 25618 / H37Rv), this protein is (2E,6E)-farnesyl diphosphate synthase.